Reading from the N-terminus, the 1265-residue chain is Methionine synthase (1265 aa).

In terms of domain architecture, Hcy-binding spans Arg19–Val338. Residues Cys260, Cys323, and Cys324 each coordinate Zn(2+). Residues Phe371 to Glu632 enclose the Pterin-binding domain. (6S)-5,6,7,8-tetrahydrofolate-binding positions include Gly382 to Arg384, Asp449, Asn470, Asp537, Asn579, Arg585, and Arg591. A B12-binding N-terminal domain is found at Gln662–Arg759. Residues Glu709, Gly782–Asp786, His785, Ser830, Thr834, and Ala886 contribute to the methylcob(III)alamin site. Positions Gln772–Glu907 constitute a B12-binding domain. The AdoMet activation domain occupies Ser923–Asp1265. S-adenosyl-L-methionine-binding positions include Asp974, Arg1172, and Tyr1227–Phe1228. Thr1264 carries the post-translational modification Phosphothreonine.

It belongs to the vitamin-B12 dependent methionine synthase family. As to quaternary structure, monomer. Dimer. Forms a multiprotein complex with MMACHC, MMADHC and MTRR. Requires methylcob(III)alamin as cofactor. The cofactor is Zn(2+). In terms of tissue distribution, widely expressed. Expressed at the highest levels in pancreas, heart, brain, skeletal muscle and placenta. Expressed at lower levels in lung, liver and kidney.

The protein localises to the cytoplasm. The enzyme catalyses (6S)-5-methyl-5,6,7,8-tetrahydrofolate + L-homocysteine = (6S)-5,6,7,8-tetrahydrofolate + L-methionine. It participates in amino-acid biosynthesis; L-methionine biosynthesis via de novo pathway; L-methionine from L-homocysteine (MetH route): step 1/1. Functionally, catalyzes the transfer of a methyl group from methylcob(III)alamin (MeCbl) to homocysteine, yielding enzyme-bound cob(I)alamin and methionine in the cytosol. MeCbl is an active form of cobalamin (vitamin B12) used as a cofactor for methionine biosynthesis. Cob(I)alamin form is regenerated to MeCbl by a transfer of a methyl group from 5-methyltetrahydrofolate. The processing of cobalamin in the cytosol occurs in a multiprotein complex composed of at least MMACHC, MMADHC, MTRR (methionine synthase reductase) and MTR which may contribute to shuttle safely and efficiently cobalamin towards MTR in order to produce methionine. The sequence is that of Methionine synthase from Homo sapiens (Human).